Reading from the N-terminus, the 543-residue chain is CTP synthase (543 aa).

The tract at residues 1–267 (MKQTKYIFVT…LSPIAEILDL (267 aa)) is amidoligase domain. Position 15 (Ser-15) interacts with CTP. Residue Ser-15 participates in UTP binding. ATP contacts are provided by residues 16–21 (SLGKGI) and Asp-73. Mg(2+) contacts are provided by Asp-73 and Glu-141. CTP is bound by residues 148–150 (DIE), 188–193 (KTKPTQ), and Lys-224. UTP contacts are provided by residues 188 to 193 (KTKPTQ) and Lys-224. The Glutamine amidotransferase type-1 domain maps to 292–543 (KIAFVGKYVD…IKAAINYEDN (252 aa)). Position 354 (Gly-354) interacts with L-glutamine. Cys-381 (nucleophile; for glutamine hydrolysis) is an active-site residue. L-glutamine contacts are provided by residues 382–385 (LGMQ), Glu-405, and Arg-473. Active-site residues include His-516 and Glu-518.

Belongs to the CTP synthase family. In terms of assembly, homotetramer.

It carries out the reaction UTP + L-glutamine + ATP + H2O = CTP + L-glutamate + ADP + phosphate + 2 H(+). The enzyme catalyses L-glutamine + H2O = L-glutamate + NH4(+). It catalyses the reaction UTP + NH4(+) + ATP = CTP + ADP + phosphate + 2 H(+). Its pathway is pyrimidine metabolism; CTP biosynthesis via de novo pathway; CTP from UDP: step 2/2. Its activity is regulated as follows. Allosterically activated by GTP, when glutamine is the substrate; GTP has no effect on the reaction when ammonia is the substrate. The allosteric effector GTP functions by stabilizing the protein conformation that binds the tetrahedral intermediate(s) formed during glutamine hydrolysis. Inhibited by the product CTP, via allosteric rather than competitive inhibition. Catalyzes the ATP-dependent amination of UTP to CTP with either L-glutamine or ammonia as the source of nitrogen. Regulates intracellular CTP levels through interactions with the four ribonucleotide triphosphates. This chain is CTP synthase, found in Campylobacter jejuni subsp. jejuni serotype O:6 (strain 81116 / NCTC 11828).